A 302-amino-acid chain; its full sequence is tRNA dimethylallyltransferase (302 aa).

Residue 7–14 coordinates ATP; it reads GPTASGKS. 9–14 contacts substrate; it reads TASGKS. Interaction with substrate tRNA regions lie at residues 32–35 and 156–160; these read DSMQ and QRILR.

The protein belongs to the IPP transferase family. As to quaternary structure, monomer. It depends on Mg(2+) as a cofactor.

The catalysed reaction is adenosine(37) in tRNA + dimethylallyl diphosphate = N(6)-dimethylallyladenosine(37) in tRNA + diphosphate. Catalyzes the transfer of a dimethylallyl group onto the adenine at position 37 in tRNAs that read codons beginning with uridine, leading to the formation of N6-(dimethylallyl)adenosine (i(6)A). The chain is tRNA dimethylallyltransferase from Beijerinckia indica subsp. indica (strain ATCC 9039 / DSM 1715 / NCIMB 8712).